A 154-amino-acid chain; its full sequence is Aspartate carbamoyltransferase regulatory chain (154 aa).

4 residues coordinate Zn(2+): Cys109, Cys114, Cys138, and Cys141.

This sequence belongs to the PyrI family. In terms of assembly, contains catalytic and regulatory chains. The cofactor is Zn(2+).

Functionally, involved in allosteric regulation of aspartate carbamoyltransferase. The sequence is that of Aspartate carbamoyltransferase regulatory chain from Aliivibrio fischeri (strain ATCC 700601 / ES114) (Vibrio fischeri).